Consider the following 160-residue polypeptide: Nucleotide-binding protein CPS_1098 (160 aa).

The protein belongs to the YajQ family.

Nucleotide-binding protein. In Colwellia psychrerythraea (strain 34H / ATCC BAA-681) (Vibrio psychroerythus), this protein is Nucleotide-binding protein CPS_1098.